The chain runs to 590 residues: Zinc finger protein 703 (590 aa).

A compositionally biased stretch (polar residues) spans 1 to 14; sequence MSDSPAGSNPRTPE. 3 disordered regions span residues 1-43, 96-293, and 341-366; these read MSDS…DPLR, CSQI…AGHV, and LVGG…LTGA. Serine 2 carries the N-acetylserine modification. Composition is skewed to low complexity over residues 27-37, 128-139, 171-189, and 207-219; these read PAVPAAVSLLP, RSAPGAASAAAA, GSSS…PGDK, and APVS…SSPG. Over residues 241–251 the composition is skewed to basic and acidic residues; it reads ELDKKDQEPKP. Position 252 is a phosphoserine (serine 252). Gly residues-rich tracts occupy residues 260 to 273 and 341 to 352; these read RGGG…GGAE and LVGGQLSGGLGL. A C2H2-type zinc finger spans residues 456–484; it reads HSCNWVAASGPCDKRFATSEELLSHLRTH. Arginine 580 is subject to Omega-N-methylarginine.

It belongs to the Elbow/Noc family. As to quaternary structure, interacts with TLE4; increases transcriptional repression. Interacts with DCAF7 and PHB2. May interact with HSPD1. Expressed in mammary epithelium.

The protein resides in the nucleus. It localises to the cytoplasm. Functionally, transcriptional corepressor which does not bind directly to DNA and may regulate transcription through recruitment of histone deacetylases to gene promoters. Regulates cell adhesion, migration and proliferation. May be required for segmental gene expression during hindbrain development. The protein is Zinc finger protein 703 (ZNF703) of Homo sapiens (Human).